Reading from the N-terminus, the 156-residue chain is Arginine repressor (156 aa).

Belongs to the ArgR family.

Its subcellular location is the cytoplasm. Its pathway is amino-acid biosynthesis; L-arginine biosynthesis [regulation]. In terms of biological role, regulates arginine biosynthesis genes. This Shewanella frigidimarina (strain NCIMB 400) protein is Arginine repressor.